Here is a 954-residue protein sequence, read N- to C-terminus: Glycine dehydrogenase (decarboxylating) (954 aa).

K699 carries the post-translational modification N6-(pyridoxal phosphate)lysine.

It belongs to the GcvP family. As to quaternary structure, the glycine cleavage system is composed of four proteins: P, T, L and H. Pyridoxal 5'-phosphate is required as a cofactor.

It catalyses the reaction N(6)-[(R)-lipoyl]-L-lysyl-[glycine-cleavage complex H protein] + glycine + H(+) = N(6)-[(R)-S(8)-aminomethyldihydrolipoyl]-L-lysyl-[glycine-cleavage complex H protein] + CO2. Functionally, the glycine cleavage system catalyzes the degradation of glycine. The P protein binds the alpha-amino group of glycine through its pyridoxal phosphate cofactor; CO(2) is released and the remaining methylamine moiety is then transferred to the lipoamide cofactor of the H protein. The sequence is that of Glycine dehydrogenase (decarboxylating) from Nitrobacter winogradskyi (strain ATCC 25391 / DSM 10237 / CIP 104748 / NCIMB 11846 / Nb-255).